The chain runs to 252 residues: uncharacterized protein (252 aa).

Belongs to the methyltransferase superfamily.

This is an uncharacterized protein from Mycobacterium sp. (strain JLS).